The chain runs to 75 residues: Transcription attenuation protein MtrB (75 aa).

This sequence belongs to the MtrB family. As to quaternary structure, oligomer of 11 identical subunits arranged in doughnut-like structure.

Its function is as follows. Required for transcription attenuation control in the Trp operon. This trans-acting factor seems to recognize a 10 bases nucleotide sequence in the Trp leader transcript causing transcription termination. Binds the leader RNA only in presence of L-tryptophan. This is Transcription attenuation protein MtrB from Bacillus velezensis (strain DSM 23117 / BGSC 10A6 / LMG 26770 / FZB42) (Bacillus amyloliquefaciens subsp. plantarum).